Reading from the N-terminus, the 233-residue chain is Zinc import ATP-binding protein ZnuC (233 aa).

In terms of domain architecture, ABC transporter spans 6-222; it reads IEFRNVSKKF…SEFSNALSAL (217 aa). 38–45 serves as a coordination point for ATP; the sequence is GPNGAGKT.

Belongs to the ABC transporter superfamily. Zinc importer (TC 3.A.1.15.5) family. The complex is composed of two ATP-binding proteins (ZnuC), two transmembrane proteins (ZnuB) and a solute-binding protein (ZnuA).

Its subcellular location is the cell inner membrane. The enzyme catalyses Zn(2+)(out) + ATP(in) + H2O(in) = Zn(2+)(in) + ADP(in) + phosphate(in) + H(+)(in). Its function is as follows. Part of the ABC transporter complex ZnuABC involved in zinc import. Responsible for energy coupling to the transport system. In Rickettsia conorii (strain ATCC VR-613 / Malish 7), this protein is Zinc import ATP-binding protein ZnuC.